A 123-amino-acid polypeptide reads, in one-letter code: Small ribosomal subunit protein uS12 (123 aa).

Asp-89 carries the post-translational modification 3-methylthioaspartic acid.

Belongs to the universal ribosomal protein uS12 family. Part of the 30S ribosomal subunit. Contacts proteins S8 and S17. May interact with IF1 in the 30S initiation complex.

Its function is as follows. With S4 and S5 plays an important role in translational accuracy. Functionally, interacts with and stabilizes bases of the 16S rRNA that are involved in tRNA selection in the A site and with the mRNA backbone. Located at the interface of the 30S and 50S subunits, it traverses the body of the 30S subunit contacting proteins on the other side and probably holding the rRNA structure together. The combined cluster of proteins S8, S12 and S17 appears to hold together the shoulder and platform of the 30S subunit. The protein is Small ribosomal subunit protein uS12 of Syntrophobacter fumaroxidans (strain DSM 10017 / MPOB).